A 529-amino-acid chain; its full sequence is Probable pectinesterase/pectinesterase inhibitor 35 (529 aa).

A signal peptide spans 1 to 34; it reads MATTSFSLPNHKFGIKLMLFLVLNLLSLQTSVFA. The segment at 36-180 is pectinesterase inhibitor 35; sequence SSNSKFTKIS…TGLLTNSLDM (145 aa). Positions 42-64 are disordered; sequence TKISRHPNSDSSSRTKPSTSSNK. Positions 50–64 are enriched in low complexity; sequence SDSSSRTKPSTSSNK. 3 N-linked (GlcNAc...) asparagine glycosylation sites follow: Asn86, Asn169, and Asn193. The pectinesterase 35 stretch occupies residues 228 to 514; sequence HAVVAADGSG…FTVSGFIDGN (287 aa). The substrate site is built by Thr302 and Gln332. Catalysis depends on Asp355, which acts as the Proton donor; for pectinesterase activity. Catalysis depends on Asp376, which acts as the Nucleophile; for pectinesterase activity. Substrate contacts are provided by Arg434 and Trp436.

It in the N-terminal section; belongs to the PMEI family. This sequence in the C-terminal section; belongs to the pectinesterase family. In terms of tissue distribution, expressed in siliques.

It is found in the secreted. It localises to the cell wall. It catalyses the reaction [(1-&gt;4)-alpha-D-galacturonosyl methyl ester](n) + n H2O = [(1-&gt;4)-alpha-D-galacturonosyl](n) + n methanol + n H(+). The protein operates within glycan metabolism; pectin degradation; 2-dehydro-3-deoxy-D-gluconate from pectin: step 1/5. Functionally, acts in the modification of cell walls via demethylesterification of cell wall pectin. In Arabidopsis thaliana (Mouse-ear cress), this protein is Probable pectinesterase/pectinesterase inhibitor 35 (PME35).